We begin with the raw amino-acid sequence, 448 residues long: Chromosomal replication initiator protein DnaA (448 aa).

Residues 1-73 (MNAQLKQLWT…INAIKLITSK (73 aa)) are domain I, interacts with DnaA modulators. The interval 73-109 (KKYNIEFSITSEEIFNNQQLKPKSSNDNIVVNDEMTS) is domain II. Residues 110 to 326 (ILNPKYTFDS…GALIRIVAYS (217 aa)) are domain III, AAA+ region. Residues Gly154, Gly156, Lys157, and Thr158 each coordinate ATP. A domain IV, binds dsDNA region spans residues 327–448 (SLTNREISVD…DDLNKKITNN (122 aa)).

It belongs to the DnaA family. In terms of assembly, oligomerizes as a right-handed, spiral filament on DNA at oriC.

It is found in the cytoplasm. Functionally, plays an essential role in the initiation and regulation of chromosomal replication. ATP-DnaA binds to the origin of replication (oriC) to initiate formation of the DNA replication initiation complex once per cell cycle. Binds the DnaA box (a 9 base pair repeat at the origin) and separates the double-stranded (ds)DNA. Forms a right-handed helical filament on oriC DNA; dsDNA binds to the exterior of the filament while single-stranded (ss)DNA is stabiized in the filament's interior. The ATP-DnaA-oriC complex binds and stabilizes one strand of the AT-rich DNA unwinding element (DUE), permitting loading of DNA polymerase. After initiation quickly degrades to an ADP-DnaA complex that is not apt for DNA replication. Binds acidic phospholipids. The chain is Chromosomal replication initiator protein DnaA from Clostridium novyi (strain NT).